We begin with the raw amino-acid sequence, 110 residues long: Ribonuclease P protein component 1 (110 aa).

It belongs to the eukaryotic/archaeal RNase P protein component 1 family. In terms of assembly, consists of a catalytic RNA component and at least 4-5 protein subunits.

It localises to the cytoplasm. It catalyses the reaction Endonucleolytic cleavage of RNA, removing 5'-extranucleotides from tRNA precursor.. Part of ribonuclease P, a protein complex that generates mature tRNA molecules by cleaving their 5'-ends. The protein is Ribonuclease P protein component 1 of Methanosarcina barkeri (strain Fusaro / DSM 804).